A 304-amino-acid polypeptide reads, in one-letter code: Tetrahydromethanopterin S-methyltransferase subunit E (304 aa).

A run of 6 helical transmembrane segments spans residues 3-23, 86-106, 131-151, 152-172, 233-253, and 263-283; these read PLIG…AGAS, PLFA…TFAV, HTPV…VVSY, LMTV…IWGI, PVTG…TTVF, and WISV…NWKI.

This sequence belongs to the MtrE family. As to quaternary structure, the complex is composed of 8 subunits; MtrA, MtrB, MtrC, MtrD, MtrE, MtrF, MtrG and MtrH.

The protein localises to the cell membrane. The catalysed reaction is 5-methyl-5,6,7,8-tetrahydromethanopterin + coenzyme M + 2 Na(+)(in) = 5,6,7,8-tetrahydromethanopterin + methyl-coenzyme M + 2 Na(+)(out). The protein operates within one-carbon metabolism; methanogenesis from CO(2); methyl-coenzyme M from 5,10-methylene-5,6,7,8-tetrahydromethanopterin: step 2/2. Its function is as follows. Part of a complex that catalyzes the formation of methyl-coenzyme M and tetrahydromethanopterin from coenzyme M and methyl-tetrahydromethanopterin. This is an energy-conserving, sodium-ion translocating step. The polypeptide is Tetrahydromethanopterin S-methyltransferase subunit E (Methanosarcina acetivorans (strain ATCC 35395 / DSM 2834 / JCM 12185 / C2A)).